A 145-amino-acid chain; its full sequence is 3-dehydroquinate dehydratase (145 aa).

Residue Y22 is the Proton acceptor of the active site. Residues N71, H77, and D84 each contribute to the substrate site. Catalysis depends on H97, which acts as the Proton donor. Substrate-binding positions include 98–99 (IS) and R108.

It belongs to the type-II 3-dehydroquinase family. In terms of assembly, homododecamer.

It catalyses the reaction 3-dehydroquinate = 3-dehydroshikimate + H2O. The protein operates within metabolic intermediate biosynthesis; chorismate biosynthesis; chorismate from D-erythrose 4-phosphate and phosphoenolpyruvate: step 3/7. Its function is as follows. Catalyzes a trans-dehydration via an enolate intermediate. This Exiguobacterium sp. (strain ATCC BAA-1283 / AT1b) protein is 3-dehydroquinate dehydratase.